Consider the following 406-residue polypeptide: uncharacterized protein (406 aa).

The tract at residues 1–36 is disordered; it reads MDRVRSLIGNRRGRRHNRQHPPYPHSGSPSTVNLLG.

To yeast YMR316w.

This is an uncharacterized protein from Saccharomyces cerevisiae (strain ATCC 204508 / S288c) (Baker's yeast).